A 287-amino-acid polypeptide reads, in one-letter code: MGLDNLKVGLAQMLKGGVIMDVVTPDQAKIAEDAGAVAVMALEKIPSDIRASGGVSRMSDPGLIERVMDSVSIPVMAKVRIGHFAEAQILQSLKVDYIDESEVLSVADSSYHIDKRKFTVPFVCGATNLGEALRRISEGASMIRSKGEAGTGDIAQATKHIRAILSEISALTQAREDELPARARKLGAPIDLVRETARLGRLPVVLFTAGGIATPADSSLVMQLGSDGVFVGSGIFKSEDPKAYAAAIVQATAQYDDADLLARVSRNLGQAMPGVSNLDVRFSNRGV.

Asp-21 contributes to the D-ribose 5-phosphate binding site. Lys-78 acts as the Schiff-base intermediate with D-ribose 5-phosphate in catalysis. Gly-150 is a binding site for D-ribose 5-phosphate. Residue Arg-162 coordinates D-glyceraldehyde 3-phosphate. Residues Gly-211 and 232 to 233 each bind D-ribose 5-phosphate; that span reads GS.

It belongs to the PdxS/SNZ family. In the presence of PdxT, forms a dodecamer of heterodimers.

It catalyses the reaction aldehydo-D-ribose 5-phosphate + D-glyceraldehyde 3-phosphate + L-glutamine = pyridoxal 5'-phosphate + L-glutamate + phosphate + 3 H2O + H(+). The protein operates within cofactor biosynthesis; pyridoxal 5'-phosphate biosynthesis. Catalyzes the formation of pyridoxal 5'-phosphate from ribose 5-phosphate (RBP), glyceraldehyde 3-phosphate (G3P) and ammonia. The ammonia is provided by the PdxT subunit. Can also use ribulose 5-phosphate and dihydroxyacetone phosphate as substrates, resulting from enzyme-catalyzed isomerization of RBP and G3P, respectively. This Tropheryma whipplei (strain Twist) (Whipple's bacillus) protein is Pyridoxal 5'-phosphate synthase subunit PdxS.